The chain runs to 556 residues: Glutamine--tRNA ligase (556 aa).

The short motif at proline 34–histidine 44 is the 'HIGH' region element. ATP contacts are provided by residues glutamate 35–asparagine 37 and histidine 41–serine 47. Residues aspartate 67 and tyrosine 212 each contribute to the L-glutamine site. Residues threonine 231, arginine 261–leucine 262, and methionine 269–lysine 271 each bind ATP. Positions valine 268 to arginine 272 match the 'KMSKS' region motif.

The protein belongs to the class-I aminoacyl-tRNA synthetase family. As to quaternary structure, monomer.

The protein resides in the cytoplasm. It catalyses the reaction tRNA(Gln) + L-glutamine + ATP = L-glutaminyl-tRNA(Gln) + AMP + diphosphate. This Vibrio cholerae serotype O1 (strain ATCC 39315 / El Tor Inaba N16961) protein is Glutamine--tRNA ligase.